The chain runs to 288 residues: Prohibitin-1, mitochondrial (288 aa).

The Mitochondrial matrix segment spans residues 1 to 10 (MNNVKVPKIP). A helical; Signal-anchor for type II membrane protein membrane pass occupies residues 11–30 (GGGAISTLLKVGIIGGLGLY). Residues 31-288 (GATHSLYNVE…GMNLDVDAKN (258 aa)) lie on the Mitochondrial intermembrane side of the membrane. Positions 186–219 (KEFTAAIEAKQVAAQEAERAKFIVEKAEQDKRSA) form a coiled coil.

This sequence belongs to the prohibitin family. As to quaternary structure, component of a prohibitin multimeric complex in mitochondrial membranes. Mostly expressed in proliferative tissues, including vasculature, shoot and root apical tissues.

The protein resides in the mitochondrion inner membrane. Its function is as follows. Prohibitin probably acts as a holdase/unfoldase for the stabilization of newly synthesized mitochondrial proteins. The chain is Prohibitin-1, mitochondrial (PHB1) from Arabidopsis thaliana (Mouse-ear cress).